Reading from the N-terminus, the 182-residue chain is Large ribosomal subunit protein uL5 (182 aa).

In terms of assembly, part of the 50S ribosomal subunit; part of the 5S rRNA/uL5/uL18/bL25 (TL7) subcomplex; has also been isolated as a complex with 5S rRNA, bL25 (TL7) and DNA binding protein II. Forms a bridge to the 30S subunit in the 70S ribosome, contacting protein uS13; this bridge is straddled by the 5S rRNA. Contacts the P site tRNA.

Functionally, this is one of the proteins that bind and probably mediate the attachment of the 5S RNA into the large ribosomal subunit, where it forms part of the central protuberance. In the 70S ribosome it contacts protein S13 of the 30S subunit (forming bridge B1b) connecting the head of the 30S subunit to the top of the 50S subunit. The bridge itself contacts the P site tRNA and is implicated in movement during ribosome translocation. Also contacts the P site tRNA independently of the intersubunit bridge; the 5S rRNA and some of its associated proteins might help stabilize positioning of ribosome-bound tRNAs. The sequence is that of Large ribosomal subunit protein uL5 (rplE) from Thermus thermophilus (strain ATCC 27634 / DSM 579 / HB8).